The sequence spans 204 residues: UPF0056 membrane protein CT_852 (204 aa).

6 consecutive transmembrane segments (helical) span residues 9–29, 39–59, 66–86, 107–127, 138–158, and 176–196; these read TLLFYALFNALGSLPVFIALL, HIILRESIFALLLLLLFVTFG, LGIILPAFQFTGSLLLGSIAI, IFFPLAFPVITGPAMITSTLG, IVLGAIVLAWLFSLITLLLSS, and FGISLALMAGNLMLKALSTAF.

This sequence belongs to the UPF0056 (MarC) family.

The protein localises to the cell membrane. This Chlamydia trachomatis serovar D (strain ATCC VR-885 / DSM 19411 / UW-3/Cx) protein is UPF0056 membrane protein CT_852.